The following is a 104-amino-acid chain: Biogenesis of lysosome-related organelles complex 1 subunit BLS1 (104 aa).

This sequence belongs to the BLOC1S1 family. Component of the biogenesis of lysosome-related organelles complex-1 (BLOC-1).

The protein localises to the endosome. Functionally, component of the biogenesis of lysosome-related organelles complex-1 (BLOC-1), a complex involved in endosomal cargo sorting. This is Biogenesis of lysosome-related organelles complex 1 subunit BLS1 (BLS1) from Kluyveromyces lactis (strain ATCC 8585 / CBS 2359 / DSM 70799 / NBRC 1267 / NRRL Y-1140 / WM37) (Yeast).